The following is a 494-amino-acid chain: Cytochrome P450 2G1 (494 aa).

C439 is a binding site for heme.

It belongs to the cytochrome P450 family. Heme serves as cofactor. Olfactory epithelium.

Its subcellular location is the endoplasmic reticulum membrane. It is found in the microsome membrane. It catalyses the reaction an organic molecule + reduced [NADPH--hemoprotein reductase] + O2 = an alcohol + oxidized [NADPH--hemoprotein reductase] + H2O + H(+). In terms of biological role, cytochromes P450 are a group of heme-thiolate monooxygenases. This isozyme seems to be implicated in olfaction. The chain is Cytochrome P450 2G1 (Cyp2g1) from Rattus norvegicus (Rat).